The following is a 326-amino-acid chain: uncharacterized protein (326 aa).

Tyrosine 53 acts as the Proton donor in catalysis. 215 to 225 (SPLAGGLLGGK) serves as a coordination point for NADP(+). A coiled-coil region spans residues 242 to 305 (IEKHRLQLEK…AVEISLDKEI (64 aa)).

The protein belongs to the aldo/keto reductase family. Aldo/keto reductase 2 subfamily.

This is an uncharacterized protein from Bacillus subtilis (strain 168).